The following is a 464-amino-acid chain: Soluble pyridine nucleotide transhydrogenase (464 aa).

35–44 serves as a coordination point for FAD; it reads DSRRQVGGNC.

The protein belongs to the class-I pyridine nucleotide-disulfide oxidoreductase family. The cofactor is FAD.

It localises to the cytoplasm. It catalyses the reaction NAD(+) + NADPH = NADH + NADP(+). Its function is as follows. Conversion of NADPH, generated by peripheral catabolic pathways, to NADH, which can enter the respiratory chain for energy generation. The protein is Soluble pyridine nucleotide transhydrogenase of Pseudomonas entomophila (strain L48).